A 1989-amino-acid chain; its full sequence is Exophilin-5 (1989 aa).

A RabBD domain is found at A7–I63. Disordered regions lie at residues N93 to S117 and T348 to A391. Composition is skewed to polar residues over residues T100–K111 and H359–S376. Residues D377–L389 are compositionally biased toward basic and acidic residues. Phosphoserine is present on S603. Disordered regions lie at residues F631–V651, S806–Q827, and A882–N933. Positions P641–V651 are enriched in polar residues. A phosphoserine mark is found at S806 and S809. Polar residues predominate over residues K891 to R909. Over residues S910–A927 the composition is skewed to basic and acidic residues. S1028 and S1086 each carry phosphoserine. 3 disordered regions span residues E1094–G1113, S1124–L1152, and E1365–Q1493. The segment covering R1098 to V1110 has biased composition (polar residues). S1124 carries the phosphoserine modification. Positions S1379–Q1390 are enriched in basic and acidic residues. A compositionally biased stretch (low complexity) spans S1416 to S1431. Residues N1434–C1447 are compositionally biased toward polar residues. Phosphoserine is present on S1505. 2 disordered regions span residues E1521 to S1590 and P1644 to F1737. Composition is skewed to basic and acidic residues over residues E1551–Q1560, N1573–S1589, and R1658–E1670. The segment covering T1685–S1709 has biased composition (polar residues). A phosphoserine mark is found at S1753, S1768, S1821, and S1851. The segment at F1921 to L1989 is disordered. Low complexity predominate over residues S1933–S1943. Over residues Y1959 to L1989 the composition is skewed to acidic residues.

In terms of assembly, interacts with RAB27A. Expressed in keratinocytes.

Its function is as follows. May act as Rab effector protein and play a role in vesicle trafficking. The protein is Exophilin-5 of Homo sapiens (Human).